Reading from the N-terminus, the 622-residue chain is Palmitoyltransferase ZDHHC13 (622 aa).

Methionine 1 bears the N-acetylmethionine mark. Topologically, residues methionine 1 to glutamate 291 are cytoplasmic. ANK repeat units lie at residues proline 43 to proline 78, glutamate 81 to glutamine 110, leucine 115 to leucine 144, glutamate 148 to methionine 177, asparagine 181 to valine 211, histidine 216 to isoleucine 245, and lysine 249 to alanine 277. The chain crosses the membrane as a helical span at residues leucine 292–phenylalanine 312. The Lumenal segment spans residues asparagine 313–lysine 320. Residues glycine 321–tyrosine 341 form a helical membrane-spanning segment. The Cytoplasmic segment spans residues lysine 342–leucine 347. A helical transmembrane segment spans residues proline 348–phenylalanine 368. At proline 369–threonine 371 the chain is on the lumenal side. A helical membrane pass occupies residues alanine 372–tyrosine 392. The Cytoplasmic portion of the chain corresponds to lysine 393–histidine 470. The DHHC domain occupies threonine 426–leucine 476. Cysteine 456 (S-palmitoyl cysteine intermediate) is an active-site residue. The chain crosses the membrane as a helical span at residues tyrosine 471–valine 491. Residues tyrosine 492–proline 518 lie on the Lumenal side of the membrane. Residues tryptophan 519–isoleucine 539 traverse the membrane as a helical segment. The Cytoplasmic segment spans residues asparagine 540 to valine 622.

This sequence belongs to the DHHC palmitoyltransferase family. AKR/ZDHHC17 subfamily. As to quaternary structure, interacts (via ANK repeats) with CLIP3. Interacts (via ANK repeats) with DNAJC5 (via C-terminus). Interacts (via ANK repeats) with HTT. Interacts (via ANK repeats) with MAP6. Interacts (via ANK repeats) with SNAP23. Interacts (via ANK repeats) with SNAP25. May interact (via ANK repeats) with SPRED2. Expressed in most adult tissues, but at low levels in the liver, skin, and lung.

The protein localises to the golgi apparatus membrane. It localises to the cytoplasmic vesicle membrane. It catalyses the reaction L-cysteinyl-[protein] + hexadecanoyl-CoA = S-hexadecanoyl-L-cysteinyl-[protein] + CoA. Functionally, palmitoyltransferase that could catalyze the addition of palmitate onto various protein substrates. Palmitoyltransferase for HTT and GAD2. May play a role in Mg(2+) transport. This Mus musculus (Mouse) protein is Palmitoyltransferase ZDHHC13.